A 718-amino-acid polypeptide reads, in one-letter code: Polyribonucleotide nucleotidyltransferase (718 aa).

Mg(2+)-binding residues include Asp-496 and Asp-502. A KH domain is found at 563-622; sequence PRLLTIKIDPDMIGLVIGPGGKTIKGITEETGAKIDIEDDGTVTISAVDENKAKRARNIV. Positions 632–700 constitute an S1 motif domain; sequence GDVYAGRVTR…NKGRINLTRL (69 aa).

May form homodimers or higher order multimers. Interacts with RNase E (rne). It depends on Mg(2+) as a cofactor.

It localises to the cytoplasm. It carries out the reaction RNA(n+1) + phosphate = RNA(n) + a ribonucleoside 5'-diphosphate. Functionally, involved in mRNA degradation. Catalyzes the phosphorolysis of single-stranded polyribonucleotides processively in the 3'- to 5'-direction. This is Polyribonucleotide nucleotidyltransferase from Nostoc sp. (strain PCC 7120 / SAG 25.82 / UTEX 2576).